The chain runs to 173 residues: Dual-action ribosomal maturation protein DarP (173 aa).

Belongs to the DarP family.

It is found in the cytoplasm. In terms of biological role, member of a network of 50S ribosomal subunit biogenesis factors which assembles along the 30S-50S interface, preventing incorrect 23S rRNA structures from forming. Promotes peptidyl transferase center (PTC) maturation. This chain is Dual-action ribosomal maturation protein DarP, found in Pseudomonas putida (strain W619).